Consider the following 347-residue polypeptide: Ubiquinone biosynthesis protein coq-4, mitochondrial (347 aa).

Residues 1-49 constitute a mitochondrion transit peptide; sequence MEVTALRRSAALVARASSQNAIRPAVCAAISSTSPTPPTQIQTQQTRQF. Residues His-185, Asp-186, His-189, and Glu-201 each contribute to the Zn(2+) site. Residues 284 to 310 are disordered; it reads IRKREREEKRRRKEMERMLSGRGTEDV.

Belongs to the COQ4 family. Component of a multi-subunit COQ enzyme complex, composed of at least coq-3, coq-4, coq-5, coq-6, coq-7 and coq-9. The cofactor is Zn(2+).

Its subcellular location is the mitochondrion inner membrane. It catalyses the reaction a 4-hydroxy-3-methoxy-5-(all-trans-polyprenyl)benzoate + H(+) = a 2-methoxy-6-(all-trans-polyprenyl)phenol + CO2. It participates in cofactor biosynthesis; ubiquinone biosynthesis. Lyase that catalyzes the C1-decarboxylation of 4-hydroxy-3-methoxy-5-(all-trans-polyprenyl)benzoic acid into 2-methoxy-6-(all-trans-polyprenyl)phenol during ubiquinone biosynthesis. This is Ubiquinone biosynthesis protein coq-4, mitochondrial from Neurospora crassa (strain ATCC 24698 / 74-OR23-1A / CBS 708.71 / DSM 1257 / FGSC 987).